The chain runs to 972 residues: 116 kDa U5 small nuclear ribonucleoprotein component (972 aa).

N-acetylmethionine is present on methionine 1. Residues 1-54 are disordered; that stretch reads MDTDLYDEFGNYIGPELDSDEDDDELGRETKDLDEMDDDDDDDDVGDHDDDHPG. 2 stretches are compositionally biased toward acidic residues: residues 17–26 and 34–48; these read LDSDEDDDEL and DEMDDDDDDDDVGDH. Serine 19 bears the Phosphoserine mark. Lysine 64 is covalently cross-linked (Glycyl lysine isopeptide (Lys-Gly) (interchain with G-Cter in SUMO1); alternate). Lysine 64 is covalently cross-linked (Glycyl lysine isopeptide (Lys-Gly) (interchain with G-Cter in SUMO2); alternate). The residue at position 86 (threonine 86) is a Phosphothreonine. A tr-type G domain is found at 127–409; that stretch reads ELIRNVTLCG…GIHLTKEELK (283 aa). Residues 136–143, 204–208, and 258–261 contribute to the GTP site; these read GHLHHGKT, DTPGH, and NKID.

This sequence belongs to the TRAFAC class translation factor GTPase superfamily. Classic translation factor GTPase family. EF-G/EF-2 subfamily. As to quaternary structure, component of the U5 snRNP and the U4/U6-U5 tri-snRNP complex, a building block of the spliceosome. The U4/U6-U5 tri-snRNP complex is composed of the U4, U6 and U5 snRNAs and at least PRPF3, PRPF4, PRPF6, PRPF8, PRPF31, SNRNP200, TXNL4A, SNRNP40, DDX23, CD2BP2, PPIH, SNU13, EFTUD2, SART1 and USP39. Component of the pre-catalytic, catalytic and post-catalytic spliceosome complexes. Component of the minor spliceosome, which splices U12-type introns. Within this complex, interacts with CRIPT. Interacts with ERBB4 and PRPF8. Interacts with PIH1D1. Interacts with RPAP3 and URI1 in a ZNHIT2-dependent manner. Interacts with NRDE2. Interacts with FAM50A. Interacts with UBL5.

The protein localises to the nucleus. Functionally, required for pre-mRNA splicing as component of the spliceosome, including pre-catalytic, catalytic and post-catalytic spliceosomal complexes. Component of the U5 snRNP and the U4/U6-U5 tri-snRNP complex, a building block of the spliceosome. As a component of the minor spliceosome, involved in the splicing of U12-type introns in pre-mRNAs. The polypeptide is 116 kDa U5 small nuclear ribonucleoprotein component (EFTUD2) (Homo sapiens (Human)).